A 289-amino-acid polypeptide reads, in one-letter code: D-alanine aminotransferase (289 aa).

Substrate is bound at residue Y31. R50 serves as a coordination point for pyridoxal 5'-phosphate. Positions 99 and 101 each coordinate substrate. The residue at position 147 (K147) is an N6-(pyridoxal phosphate)lysine. A pyridoxal 5'-phosphate-binding site is contributed by E179.

This sequence belongs to the class-IV pyridoxal-phosphate-dependent aminotransferase family. Homodimer. It depends on pyridoxal 5'-phosphate as a cofactor.

The catalysed reaction is D-alanine + 2-oxoglutarate = D-glutamate + pyruvate. In terms of biological role, acts on the D-isomers of alanine, leucine, aspartate, glutamate, aminobutyrate, norvaline and asparagine. The enzyme transfers an amino group from a substrate D-amino acid to the pyridoxal phosphate cofactor to form pyridoxamine and an alpha-keto acid in the first half-reaction. The second half-reaction is the reverse of the first, transferring the amino group from the pyridoxamine to a second alpha-keto acid to form the product D-amino acid via a ping-pong mechanism. This is an important process in the formation of D-alanine and D-glutamate, which are essential bacterial cell wall components. The sequence is that of D-alanine aminotransferase (dat) from Listeria monocytogenes serovar 1/2a (strain ATCC BAA-679 / EGD-e).